A 198-amino-acid chain; its full sequence is Recombination protein RecR (198 aa).

The segment at C59–C74 adopts a C4-type zinc-finger fold. Positions T82–P175 constitute a Toprim domain.

It belongs to the RecR family.

May play a role in DNA repair. It seems to be involved in an RecBC-independent recombinational process of DNA repair. It may act with RecF and RecO. This is Recombination protein RecR from Desulfitobacterium hafniense (strain Y51).